A 148-amino-acid chain; its full sequence is uncharacterized protein (148 aa).

4 helical membrane passes run 29-49, 61-81, 99-119, and 121-141; these read FSLV…AAKE, PIIL…PLVM, FIVF…NGFL, and ILVS…TLCI.

It localises to the cell membrane. This is an uncharacterized protein from Bacillus subtilis (strain 168).